The chain runs to 694 residues: Soluble starch synthase 2-2, chloroplastic/amyloplastic (694 aa).

Residues 1–15 constitute a chloroplast transit peptide; it reads MSGAIASSPAATLFL. A disordered region spans residues 93 to 197; the sequence is KADHVEDSVS…DSENKESGPL (105 aa). Positions 127-142 are enriched in low complexity; sequence APVSKPKVDPSVPASK. Residues 156 to 176 show a composition bias toward basic and acidic residues; sequence AALDKKEDVGVAEPLEAKADA. Low complexity predominate over residues 177-186; sequence GGDAGAVSSA. Residue lysine 217 coordinates ADP-alpha-D-glucose.

This sequence belongs to the glycosyltransferase 1 family. Bacterial/plant glycogen synthase subfamily. Expressed in leaves and weakly in endosperm and roots.

Its subcellular location is the plastid. It is found in the amyloplast. The protein localises to the chloroplast. The catalysed reaction is [(1-&gt;4)-alpha-D-glucosyl](n) + ADP-alpha-D-glucose = [(1-&gt;4)-alpha-D-glucosyl](n+1) + ADP + H(+). The protein operates within glycan biosynthesis; starch biosynthesis. In terms of biological role, may contribute to the deposition of transient starch in chloroplasts of leaves. This is Soluble starch synthase 2-2, chloroplastic/amyloplastic (SSII-2) from Oryza sativa subsp. japonica (Rice).